A 217-amino-acid chain; its full sequence is Ras-related protein Rab-19 (217 aa).

9 residues coordinate GTP: Ser-26, Val-28, Gly-29, Lys-30, Thr-31, Cys-32, Tyr-42, Glu-44, and Thr-49. Residue Thr-31 participates in Mg(2+) binding. A Switch 1 motif is present at residues 39–54 (SGVYMEAQQNTIGVDF). Positions 49 and 72 each coordinate Mg(2+). The Switch 2 motif lies at 74–89 (AGQERFRTITQSYYRS). GTP contacts are provided by Gly-75, Asn-130, Lys-131, Asp-133, Ser-161, Ala-162, and Lys-163. S-geranylgeranyl cysteine attachment occurs at residues Cys-215 and Cys-217. Cysteine methyl ester is present on Cys-217.

This sequence belongs to the small GTPase superfamily. Rab family. Requires Mg(2+) as cofactor.

The protein localises to the cell membrane. It catalyses the reaction GTP + H2O = GDP + phosphate + H(+). With respect to regulation, regulated by guanine nucleotide exchange factors (GEFs) which promote the exchange of bound GDP for free GTP. Regulated by GTPase activating proteins (GAPs) which increase the GTP hydrolysis activity. Inhibited by GDP dissociation inhibitors (GDIs). Its function is as follows. The small GTPases Rab are key regulators of intracellular membrane trafficking, from the formation of transport vesicles to their fusion with membranes. Rabs cycle between an inactive GDP-bound form and an active GTP-bound form that is able to recruit to membranes different set of downstream effectors directly responsible for vesicle formation, movement, tethering and fusion. The sequence is that of Ras-related protein Rab-19 (RAB19) from Bos taurus (Bovine).